A 679-amino-acid polypeptide reads, in one-letter code: Glycine--tRNA ligase beta subunit (679 aa).

It belongs to the class-II aminoacyl-tRNA synthetase family. In terms of assembly, tetramer of two alpha and two beta subunits.

The protein resides in the cytoplasm. It catalyses the reaction tRNA(Gly) + glycine + ATP = glycyl-tRNA(Gly) + AMP + diphosphate. This is Glycine--tRNA ligase beta subunit from Streptococcus pyogenes serotype M6 (strain ATCC BAA-946 / MGAS10394).